The primary structure comprises 862 residues: DNA mismatch repair protein MutS (862 aa).

608–615 (GPNMAGKS) contributes to the ATP binding site.

This sequence belongs to the DNA mismatch repair MutS family.

This protein is involved in the repair of mismatches in DNA. It is possible that it carries out the mismatch recognition step. This protein has a weak ATPase activity. This is DNA mismatch repair protein MutS from Bacteroides thetaiotaomicron (strain ATCC 29148 / DSM 2079 / JCM 5827 / CCUG 10774 / NCTC 10582 / VPI-5482 / E50).